A 475-amino-acid polypeptide reads, in one-letter code: Zinc finger protein 296 (475 aa).

The tract at residues 1–78 (MSRRKAGSAP…SPGPMPAGAA (78 aa)) is disordered. Lysine 35 participates in a covalent cross-link: Glycyl lysine isopeptide (Lys-Gly) (interchain with G-Cter in SUMO2). 3 C2H2-type zinc fingers span residues 157-180 (LSCL…QWDH), 231-253 (PTCP…MRSH), and 259-281 (YACD…KKTH). The segment at 275 to 385 (NRHKKTHRQV…KSGGKSRGPG (111 aa)) is disordered. Low complexity-rich tracts occupy residues 295-313 (SQEQ…AAAP) and 326-338 (GAAA…EPGA). Residues 339–351 (PGSGAQAGPGGDT) are compositionally biased toward gly residues. A compositionally biased stretch (polar residues) spans 354–367 (AITTEQRTDPANSQ). C2H2-type zinc fingers lie at residues 386-408 (GSCE…RRSH), 414-436 (YTCE…RRMH), and 445-468 (FECP…RQKH).

It belongs to the krueppel C2H2-type zinc-finger protein family. In terms of assembly, interacts with KLF4.

Its subcellular location is the nucleus. In terms of biological role, may be a transcriptional corepressor with KLF4. The protein is Zinc finger protein 296 (ZNF296) of Homo sapiens (Human).